The chain runs to 539 residues: Serine/threonine-protein kinase BUR1 (539 aa).

A compositionally biased stretch (polar residues) spans 1–15 (MEKLSETTPNGTSPR). Residues 1 to 27 (MEKLSETTPNGTSPRTFALNHSRPRSS) form a disordered region. Positions 37 to 339 (YELLGKLGEG…AVDALQHPWF (303 aa)) constitute a Protein kinase domain. ATP is bound by residues 43-51 (LGEGTFGEV) and lysine 66. The active-site Proton acceptor is the aspartate 169. Residues 370 to 539 (AALPPAPKGG…DRPDHNGYRR (170 aa)) form a disordered region. 3 stretches are compositionally biased toward basic and acidic residues: residues 414–428 (NGPD…RERG), 471–514 (NRDD…DRGT), and 521–539 (PRHD…GYRR).

This sequence belongs to the protein kinase superfamily. CMGC Ser/Thr protein kinase family. CDC2/CDKX subfamily.

The protein localises to the nucleus. The enzyme catalyses L-seryl-[protein] + ATP = O-phospho-L-seryl-[protein] + ADP + H(+). The catalysed reaction is L-threonyl-[protein] + ATP = O-phospho-L-threonyl-[protein] + ADP + H(+). It carries out the reaction [DNA-directed RNA polymerase] + ATP = phospho-[DNA-directed RNA polymerase] + ADP + H(+). Its function is as follows. Serine/threonine-protein kinase involved in transcription regulation. Phosphorylates the UBC2/RAD6 ubiquitin-conjugating enzyme (E2), leading to monoubiquitination of histone H2B and the silencing of telomeric-associated genes. Also required for histone H3 methylation. Necessary for the recovery from pheromone-induced growth arrest in the cell cycle G1 phase. This is Serine/threonine-protein kinase BUR1 (BUR1) from Gibberella zeae (strain ATCC MYA-4620 / CBS 123657 / FGSC 9075 / NRRL 31084 / PH-1) (Wheat head blight fungus).